The chain runs to 313 residues: Heterogeneous nuclear ribonucleoproteins C1/C2 (313 aa).

Residue A2 is modified to N-acetylalanine. Glycyl lysine isopeptide (Lys-Gly) (interchain with G-Cter in SUMO2) cross-links involve residues K8, K50, K89, and K94. An RRM domain is found at 16–87 (SRVFIGNLNT…QVLDINLAAE (72 aa)). S113, S115, and S121 each carry phosphoserine. Disordered regions lie at residues 139–191 (YPAR…KLKG) and 219–313 (EKEQ…EDDS). Residues 155-161 (PSKRQRV) carry the Nuclear localization signal motif. 2 positions are modified to phosphoserine: S162 and S166. The segment covering 175 to 186 (SKSGQRGSSSKS) has biased composition (low complexity). K176 carries the post-translational modification N6-acetyllysine; alternate. Residue K176 forms a Glycyl lysine isopeptide (Lys-Gly) (interchain with G-Cter in SUMO2); alternate linkage. Residues 191-226 (GDDLQAIKKELTQIKQKVDSLLESLEKIEKEQSKQA) are a coiled coil. A Glycyl lysine isopeptide (Lys-Gly) (interchain with G-Cter in SUMO2) cross-link involves residue K224. S229, S231, and S232 each carry phosphoserine. K237 participates in a covalent cross-link: Glycyl lysine isopeptide (Lys-Gly) (interchain with G-Cter in SUMO2). A Glycyl lysine isopeptide (Lys-Gly) (interchain with G-Cter in SUMO2); alternate cross-link involves residue K240. K240 is covalently cross-linked (Glycyl lysine isopeptide (Lys-Gly) (interchain with G-Cter in SUMO1); alternate). 4 positions are modified to phosphoserine: S241, S246, S247, and S249. Over residues 250–261 (VKKDETNVKMES) the composition is skewed to basic and acidic residues. Glycyl lysine isopeptide (Lys-Gly) (interchain with G-Cter in SUMO2) cross-links involve residues K251 and K252. K258 participates in a covalent cross-link: Glycyl lysine isopeptide (Lys-Gly) (interchain with G-Cter in SUMO2); alternate. K258 is covalently cross-linked (Glycyl lysine isopeptide (Lys-Gly) (interchain with G-Cter in SUMO); alternate). Residues S261 and S268 each carry the phosphoserine modification. Positions 263-284 (AGADDSAEEGDLLDDDDNEDRG) are enriched in acidic residues. Basic and acidic residues predominate over residues 285 to 294 (DDQLELKDDE). Positions 295-313 (KEPEEGEDDRDSANGEDDS) are enriched in acidic residues. Phosphoserine is present on residues S306 and S313.

This sequence belongs to the RRM HNRPC family. RALY subfamily. As to quaternary structure, tetramer composed of 3 copies of isoform C1 and 1 copy of isoform C2. Assembly of 3 tetramers with bound pre-mRNA gives rise to a 19S complex that interacts with HNRNPA2B1 tetramers. Component of the 40S hnRNP particle. Identified in the spliceosome C complex. Interacts with IGF2BP1. Interacts with DHX9; this interaction is direct, enhanced probably by their concomitant binding to RNA and mediates the attachment to actin filaments. Interacts with PPIA/CYPA. Phosphorylated on Ser-268 and Ser-306 in resting cells. In terms of processing, sumoylated. Sumoylation reduces affinity for mRNA. Post-translationally, ubiquitinated and degraded after nucleo-cytoplasmic transport by YWHAE.

The protein localises to the nucleus. Its function is as follows. Binds pre-mRNA and nucleates the assembly of 40S hnRNP particles. Interacts with poly-U tracts in the 3'-UTR or 5'-UTR of mRNA and modulates the stability and the level of translation of bound mRNA molecules. Single HNRNPC tetramers bind 230-240 nucleotides. Trimers of HNRNPC tetramers bind 700 nucleotides. May play a role in the early steps of spliceosome assembly and pre-mRNA splicing. N6-methyladenosine (m6A) has been shown to alter the local structure in mRNAs and long non-coding RNAs (lncRNAs) via a mechanism named 'm(6)A-switch', facilitating binding of HNRNPC, leading to regulation of mRNA splicing. This chain is Heterogeneous nuclear ribonucleoproteins C1/C2 (Hnrnpc), found in Mus musculus (Mouse).